Reading from the N-terminus, the 358-residue chain is Ubiquitin thioesterase OTU1 (358 aa).

One can recognise a Ubiquitin-like domain in the interval 5-87 (FSVKLKSKKG…LIVEEKAGAA (83 aa)). The segment at 8 to 94 (KLKSKKGQFI…GAAGPTSTPL (87 aa)) is UBX-like. The segment at 83 to 108 (KAGAAGPTSTPLASGSGSSTMEDDEA) is disordered. Polar residues predominate over residues 89-102 (PTSTPLASGSGSST). Positions 161 to 285 (LLKKVVPADN…GIHYDPLYME (125 aa)) constitute an OTU domain. Residues 166-172 (VPADNSC) form a cys-loop region. D169 is an active-site residue. The active-site Nucleophile is C172. Positions 224 to 234 (IQKADSWGGAI) are variable-loop. Residues 274-278 (FDGIH) are his-loop. I277 contributes to the substrate binding site. H278 is an active-site residue. An S2 site region spans residues 301–306 (MGVYQQ). The C2H2-type zinc-finger motif lies at 328-352 (LRCMDCDVMLVGQGQAQEHAKKTGH). The active site involves H352.

The enzyme catalyses Thiol-dependent hydrolysis of ester, thioester, amide, peptide and isopeptide bonds formed by the C-terminal Gly of ubiquitin (a 76-residue protein attached to proteins as an intracellular targeting signal).. Hydrolase that can remove conjugated ubiquitin from proteins and may therefore play an important regulatory role at the level of protein turnover by preventing degradation. The polypeptide is Ubiquitin thioesterase OTU1 (Drosophila pseudoobscura pseudoobscura (Fruit fly)).